We begin with the raw amino-acid sequence, 117 residues long: Ribosome-binding factor A (117 aa).

Belongs to the RbfA family. As to quaternary structure, monomer. Binds 30S ribosomal subunits, but not 50S ribosomal subunits or 70S ribosomes.

It localises to the cytoplasm. One of several proteins that assist in the late maturation steps of the functional core of the 30S ribosomal subunit. Associates with free 30S ribosomal subunits (but not with 30S subunits that are part of 70S ribosomes or polysomes). Required for efficient processing of 16S rRNA. May interact with the 5'-terminal helix region of 16S rRNA. The chain is Ribosome-binding factor A from Petrotoga mobilis (strain DSM 10674 / SJ95).